The sequence spans 330 residues: 2-phospho-L-lactate transferase (330 aa).

D49 provides a ligand contact to 7,8-didemethyl-8-hydroxy-5-deazariboflavin.

This sequence belongs to the CofD family. As to quaternary structure, homodimer. Mg(2+) is required as a cofactor.

The catalysed reaction is (2S)-lactyl-2-diphospho-5'-guanosine + 7,8-didemethyl-8-hydroxy-5-deazariboflavin = oxidized coenzyme F420-0 + GMP + H(+). Its pathway is cofactor biosynthesis; coenzyme F420 biosynthesis. Functionally, catalyzes the transfer of the 2-phospholactate moiety from (2S)-lactyl-2-diphospho-5'-guanosine to 7,8-didemethyl-8-hydroxy-5-deazariboflavin (FO) with the formation of oxidized coenzyme F420-0 and GMP. The sequence is that of 2-phospho-L-lactate transferase from Haloarcula marismortui (strain ATCC 43049 / DSM 3752 / JCM 8966 / VKM B-1809) (Halobacterium marismortui).